A 134-amino-acid polypeptide reads, in one-letter code: Proline-rich nuclear receptor coactivator 2 (134 aa).

The segment at 1–74 (MGGGERYNIP…NNSNWNASLS (74 aa)) is disordered. Composition is skewed to polar residues over residues 11–24 (DPQSRNASKNQQQH) and 52–61 (SAVQNGGKTK). The span at 62 to 74 (SLSNNSNWNASLS) shows a compositional bias: low complexity. Residues 94–100 (SEPPSPS) carry the SH3-binding motif.

Belongs to the PNRC family. PNRC2 subfamily. Interacts with UPF1/RENT1; preferentially interacts with hyperphosphorylated form. Interacts with DCP1A. Interacts with many nuclear receptors including ESR1, ESRRA, ESRRG, NR3C1/GR, NR5A1, PGR, TR, RAR and RXR.

The protein resides in the nucleus. It localises to the cytoplasm. The protein localises to the P-body. Functionally, involved in nonsense-mediated mRNA decay (NMD) by acting as a bridge between the mRNA decapping complex and the NMD machinery. May act by targeting the NMD machinery to the P-body and recruiting the decapping machinery to aberrant mRNAs. Required for UPF1/RENT1 localization to the P-body. Plays a role in glucocorticoid receptor-mediated mRNA degradation by interacting with the glucocorticoid receptor NR3C1 in a ligand-dependent manner when it is bound to the 5' UTR of target mRNAs and recruiting the RNA helicase UPF1 and the mRNA-decapping enzyme DCP1A, leading to RNA decay. Also acts as a nuclear receptor coactivator. May play a role in controlling the energy balance between energy storage and energy expenditure. This Rattus norvegicus (Rat) protein is Proline-rich nuclear receptor coactivator 2 (Pnrc2).